Consider the following 462-residue polypeptide: METAGATADATAGPQKLSRKKYLALRKKERRKRRRQALARLREAELAQKEEEEDPLAEEKRLEEERLLEEERQRLHEEWLLREEKAQEEFRAKKKKEEEARKRKEELERKLKAEWEEQQRKEREEEEQKRQEKREREEAVQKMLDQAENELENGGTWQNPEPPMDIRVLEKDRANCPFYSKTGACRFGDRCSRKHNFPTSSPTLLIKGMFTTFGMEQCRRDDYDPDSSLEFSEEEIYQQFLDFYYDVLPEFKSVGKVIQFKVSCNLEPHLRGNVYVQYQSEEDCQAAFSVFNGRWYAGRQLQCEFCPVTRWKMAICGLFEVQQCPRGKHCNFLHVFRNPNNEYRDANRDLYPSPDWTSSSFGKNSERRERASHYDEYYGRSRRRRRSPSPDFYKRNGESDRKSSSRHRVKKSHRYGMKSRERRSSPSRRRKDHSPGPWEPEQEEPPQQESQSQPQPQPQSDP.

Positions 1-13 (METAGATADATAG) are enriched in low complexity. Disordered regions lie at residues 1-22 (META…RKKY), 44-66 (AELA…EEER), and 115-138 (WEEQ…EREE). Lys-49 is covalently cross-linked (Glycyl lysine isopeptide (Lys-Gly) (interchain with G-Cter in SUMO2)). A compositionally biased stretch (basic and acidic residues) spans 57–66 (AEEKRLEEER). The segment at 170-198 (EKDRANCPFYSKTGACRFGDRCSRKHNFP) adopts a C3H1-type 1 zinc-finger fold. Residues 202–308 (PTLLIKGMFT…RQLQCEFCPV (107 aa)) form the RRM domain. A C3H1-type 2 zinc finger spans residues 310-337 (RWKMAICGLFEVQQCPRGKHCNFLHVFR). A Phosphoserine modification is found at Ser-353. Residues 354-462 (PDWTSSSFGK…QPQPQPQSDP (109 aa)) form a disordered region. Residues 364–379 (NSERRERASHYDEYYG) show a composition bias toward basic and acidic residues. A Phosphoserine modification is found at Ser-389. Basic and acidic residues predominate over residues 392–403 (FYKRNGESDRKS). Basic residues predominate over residues 404 to 417 (SSRHRVKKSHRYGM).

As to quaternary structure, component of the U11/U12 snRNPs that are part of the U12-type spliceosome. Interacts (via RS domain) with SRSF1 and SRSF2. Interacts with U2AF2/U2AF65. In terms of processing, phosphorylated in the RS domain by SRPK1.

Its subcellular location is the nucleus. Pre-mRNA-binding protein required for splicing of both U2- and U12-type introns. Selectively interacts with the 3'-splice site of U2- and U12-type pre-mRNAs and promotes different steps in U2 and U12 intron splicing. Recruited to U12 pre-mRNAs in an ATP-dependent manner and is required for assembly of the prespliceosome, a precursor to other spliceosomal complexes. For U2-type introns, it is selectively and specifically required for the second step of splicing. The chain is U2 small nuclear ribonucleoprotein auxiliary factor 35 kDa subunit-related protein 2 (Zrsr2) from Mus musculus (Mouse).